A 176-amino-acid chain; its full sequence is MNKDDDKEGLAMFSALIDGIKPITQDKRHFRTPLKTKQEIALKEQQLHANSYFSDTYQPLLPIQGPMRWLDDGVDSLELKRLRRGDYQPDLLLDLHGYRQSEAKLELVALIQACVKQQSQCCCVMHGYGSGILKQQVPMWLVQHPMVKAFHQAPKEWGGDAALLVLIDLGELPHRR.

In terms of domain architecture, Smr spans 93 to 168; it reads LDLHGYRQSE…GDAALLVLID (76 aa).

It belongs to the SmrB family. In terms of assembly, associates with collided ribosomes, but not with correctly translating polysomes.

Its function is as follows. Acts as a ribosome collision sensor. Detects stalled/collided disomes (pairs of ribosomes where the leading ribosome is stalled and a second ribosome has collided with it) and endonucleolytically cleaves mRNA at the 5' boundary of the stalled ribosome. Stalled/collided disomes form a new interface (primarily via the 30S subunits) that binds SmrB. Cleaved mRNA becomes available for tmRNA ligation, leading to ribosomal subunit dissociation and rescue of stalled ribosomes. This Shewanella putrefaciens (strain CN-32 / ATCC BAA-453) protein is Ribosome rescue factor SmrB.